Consider the following 438-residue polypeptide: Telomeric repeat-binding factor 1 (438 aa).

Positions 1–10 (MAEDVSSTAP) are enriched in polar residues. The segment at 1 to 36 (MAEDVSSTAPSPRGCADGRDADPTEEQMAQTQRNDQ) is disordered. Residue A2 is modified to N-acetylalanine. Position 11 is a phosphoserine (S11). The interval 58–268 (EEEEEDSGLV…AAAKVVESKR (211 aa)) is TRFH dimerization. Residue K213 forms a Glycyl lysine isopeptide (Lys-Gly) (interchain with G-Cter in SUMO2) linkage. S219 is modified (phosphoserine; by ATM). The segment at 265-378 (ESKRTRTITS…PVTPEKHRAR (114 aa)) is interaction with RLIM. The segment at 268–311 (RTRTITSQDKPSGNDVEMETEANLDTRKSVSDKQSAVTESSEGT) is disordered. Residues 299-311 (DKQSAVTESSEGT) show a composition bias toward polar residues. A Glycyl lysine isopeptide (Lys-Gly) (interchain with G-Cter in SUMO2) cross-link involves residue K325. Residues 326 to 375 (LQHGTQQQDLNKKERRVGTPQSTKKKKESRRATESRIPVSKSQPVTPEKH) are disordered. The Nuclear localization signal motif lies at 337–356 (KKERRVGTPQSTKKKKESRR). A Glycyl lysine isopeptide (Lys-Gly) (interchain with G-Cter in SUMO2) cross-link involves residue K366. The region spanning 375–432 (HRARKRQAWLWEEDKNLRSGVRKYGEGNWSKILLHYKFNNRTSVMLKDRWRTMKKLKL) is the HTH myb-type domain. Residues 403 to 428 (WSKILLHYKFNNRTSVMLKDRWRTMK) constitute a DNA-binding region (H-T-H motif).

As to quaternary structure, homodimer; can contain both isoforms. Found in a complex with POT1; TINF2 and TNKS1. Interacts with ATM, TINF2, TNKS1, TNKS2, PINX1, NEK2 and MAPRE1. Component of the shelterin complex (telosome) composed of TERF1, TERF2, TINF2, TERF2IP ACD and POT1. Interacts with RLIM (via N-terminus). Interacts with FBXO4. Interaction with TINF2 protects against interaction with FBXO4 and subsequent polyubiquitination and proteasomal degradation. Interacts with GNL3L; this interaction promotes homodimerization. Interacts with TIN2. Interactions with GNL3L and TIN2 are mutually exclusive. Interacts with RTEL1. Interacts with CCDC79/TERB1. In terms of processing, phosphorylated preferentially on Ser-219 in an ATM-dependent manner in response to ionizing DNA damage. Post-translationally, ADP-ribosylation by TNKS1 or TNKS2 diminishes its ability to bind to telomeric DNA. Ubiquitinated by RLIM/RNF12, leading to its degradation by the proteasome. Ubiquitinated by a SCF (SKP1-CUL1-F-box protein) ubiquitin-protein ligase complex, leading to its degradation by the proteasome.

Its subcellular location is the nucleus. It is found in the chromosome. It localises to the telomere. The protein resides in the cytoplasm. The protein localises to the cytoskeleton. Its subcellular location is the spindle. Functionally, binds the telomeric double-stranded 5'-TTAGGG-3' repeat and negatively regulates telomere length. Involved in the regulation of the mitotic spindle. Component of the shelterin complex (telosome) that is involved in the regulation of telomere length and protection. Shelterin associates with arrays of double-stranded 5'-TTAGGG-3' repeats added by telomerase and protects chromosome ends; without its protective activity, telomeres are no longer hidden from the DNA damage surveillance and chromosome ends are inappropriately processed by DNA repair pathways. This Cricetulus griseus (Chinese hamster) protein is Telomeric repeat-binding factor 1 (TERF1).